The sequence spans 314 residues: Acetyl-coenzyme A carboxylase carboxyl transferase subunit alpha (314 aa).

The region spanning 32–289 (EIDMLEASLA…KRTFESHLSE (258 aa)) is the CoA carboxyltransferase C-terminal domain.

The protein belongs to the AccA family. In terms of assembly, acetyl-CoA carboxylase is a heterohexamer composed of biotin carboxyl carrier protein (AccB), biotin carboxylase (AccC) and two subunits each of ACCase subunit alpha (AccA) and ACCase subunit beta (AccD).

The protein localises to the cytoplasm. The enzyme catalyses N(6)-carboxybiotinyl-L-lysyl-[protein] + acetyl-CoA = N(6)-biotinyl-L-lysyl-[protein] + malonyl-CoA. Its pathway is lipid metabolism; malonyl-CoA biosynthesis; malonyl-CoA from acetyl-CoA: step 1/1. In terms of biological role, component of the acetyl coenzyme A carboxylase (ACC) complex. First, biotin carboxylase catalyzes the carboxylation of biotin on its carrier protein (BCCP) and then the CO(2) group is transferred by the carboxyltransferase to acetyl-CoA to form malonyl-CoA. This is Acetyl-coenzyme A carboxylase carboxyl transferase subunit alpha from Staphylococcus saprophyticus subsp. saprophyticus (strain ATCC 15305 / DSM 20229 / NCIMB 8711 / NCTC 7292 / S-41).